The sequence spans 354 residues: Sulfate/thiosulfate import ATP-binding protein CysA (354 aa).

An ABC transporter domain is found at 3–237 (IEVRGLSKRF…PATPFVYGFL (235 aa)). 35-42 (GPSGCGKT) is a binding site for ATP.

It belongs to the ABC transporter superfamily. Sulfate/tungstate importer (TC 3.A.1.6) family. As to quaternary structure, the complex is composed of two ATP-binding proteins (CysA), two transmembrane proteins (CysT and CysW) and a solute-binding protein (CysP).

It is found in the cell inner membrane. It carries out the reaction sulfate(out) + ATP + H2O = sulfate(in) + ADP + phosphate + H(+). It catalyses the reaction thiosulfate(out) + ATP + H2O = thiosulfate(in) + ADP + phosphate + H(+). Functionally, part of the ABC transporter complex CysAWTP involved in sulfate/thiosulfate import. Responsible for energy coupling to the transport system. In Bordetella pertussis (strain Tohama I / ATCC BAA-589 / NCTC 13251), this protein is Sulfate/thiosulfate import ATP-binding protein CysA.